A 357-amino-acid chain; its full sequence is DNA replication and repair protein RecF (357 aa).

ATP is bound at residue glycine 30–threonine 37.

Belongs to the RecF family.

The protein localises to the cytoplasm. Its function is as follows. The RecF protein is involved in DNA metabolism; it is required for DNA replication and normal SOS inducibility. RecF binds preferentially to single-stranded, linear DNA. It also seems to bind ATP. The polypeptide is DNA replication and repair protein RecF (Klebsiella pneumoniae subsp. pneumoniae (strain ATCC 700721 / MGH 78578)).